The chain runs to 1415 residues: Bridge-like lipid transfer protein family member 3B (1415 aa).

The 92-residue stretch at 3–94 (GLIKKQILKH…DKVIMEMSTC (92 aa)) folds into the Chorein N-terminal domain. 2 disordered regions span residues 267–300 (STEQ…STTP) and 882–904 (KSPL…SEGV). Positions 275–300 (ASETTQSPTPPVSSQQVKNPQTSTTP) are enriched in polar residues. Residues 1367–1404 (KAAGISKEQLVEENECLKQELAKTKMALAESHMERDRL) adopt a coiled-coil conformation.

The protein localises to the cytoplasm. It is found in the cytosol. It localises to the early endosome. In terms of biological role, tube-forming lipid transport protein which mediates the transfer of lipids between membranes at organelle contact sites. Required for retrograde traffic of vesicle clusters in the early endocytic pathway to the Golgi complex. The sequence is that of Bridge-like lipid transfer protein family member 3B (bltp3b) from Xenopus laevis (African clawed frog).